The primary structure comprises 129 residues: Protein Turandot A (129 aa).

A signal peptide spans 1-21 (MNSSTALMCFALLLISPLCMG). The N-linked (GlcNAc...) asparagine glycan is linked to asparagine 49.

It belongs to the Turandot family. In terms of tissue distribution, expressed in the fat body (at protein level).

The protein localises to the secreted. A humoral factor that plays a role in stress tolerance; gives increased resistance to the lethal effects of bacterial challenge and stress. Regulated by the JAK/STAT pathway and NF-KB-like Relish pathway in the fat body, upd3 in the hemocytes and Mekk1 in response to septic injury and consequent immune response. In Drosophila melanogaster (Fruit fly), this protein is Protein Turandot A.